A 492-amino-acid chain; its full sequence is N-succinylglutamate 5-semialdehyde dehydrogenase (492 aa).

220 to 225 (GSANTG) contributes to the NAD(+) binding site. Catalysis depends on residues E243 and C277.

The protein belongs to the aldehyde dehydrogenase family. AstD subfamily.

The catalysed reaction is N-succinyl-L-glutamate 5-semialdehyde + NAD(+) + H2O = N-succinyl-L-glutamate + NADH + 2 H(+). The protein operates within amino-acid degradation; L-arginine degradation via AST pathway; L-glutamate and succinate from L-arginine: step 4/5. Catalyzes the NAD-dependent reduction of succinylglutamate semialdehyde into succinylglutamate. This Escherichia coli (strain UTI89 / UPEC) protein is N-succinylglutamate 5-semialdehyde dehydrogenase.